The sequence spans 1067 residues: Carbamoyl phosphate synthase large chain (1067 aa).

Residues 1-401 (MPLNKDIKKV…AFLKGIRSLE (401 aa)) form a carboxyphosphate synthetic domain region. Residues Arg129, Arg169, Gly175, Gly176, Lys208, Val210, Glu215, Gly241, Ile242, His243, Gln284, and Glu298 each contribute to the ATP site. The region spanning 133 to 327 (RDMMNRINQP…IAKVAAKIAL (195 aa)) is the ATP-grasp 1 domain. Mg(2+) is bound by residues Gln284, Glu298, and Asn300. The Mn(2+) site is built by Gln284, Glu298, and Asn300. The tract at residues 402–549 (IGKYSLEHKK…YSTYEQYDEV (148 aa)) is oligomerization domain. The interval 550–932 (VVSDNKKVVV…ALYKGFVGAS (383 aa)) is carbamoyl phosphate synthetic domain. One can recognise an ATP-grasp 2 domain in the interval 674–864 (DDLLERLNIA…IVDIATRIML (191 aa)). Positions 710, 749, 751, 755, 780, 781, 782, 783, 823, and 835 each coordinate ATP. Mg(2+)-binding residues include Gln823, Glu835, and Asn837. 3 residues coordinate Mn(2+): Gln823, Glu835, and Asn837. The MGS-like domain maps to 933–1067 (MYTGDKGKTI…NRELEVFNLI (135 aa)). The allosteric domain stretch occupies residues 933–1067 (MYTGDKGKTI…NRELEVFNLI (135 aa)).

Belongs to the CarB family. In terms of assembly, composed of two chains; the small (or glutamine) chain promotes the hydrolysis of glutamine to ammonia, which is used by the large (or ammonia) chain to synthesize carbamoyl phosphate. Tetramer of heterodimers (alpha,beta)4. Requires Mg(2+) as cofactor. The cofactor is Mn(2+).

The enzyme catalyses hydrogencarbonate + L-glutamine + 2 ATP + H2O = carbamoyl phosphate + L-glutamate + 2 ADP + phosphate + 2 H(+). It catalyses the reaction hydrogencarbonate + NH4(+) + 2 ATP = carbamoyl phosphate + 2 ADP + phosphate + 2 H(+). Its pathway is amino-acid biosynthesis; L-arginine biosynthesis; carbamoyl phosphate from bicarbonate: step 1/1. It functions in the pathway pyrimidine metabolism; UMP biosynthesis via de novo pathway; (S)-dihydroorotate from bicarbonate: step 1/3. Functionally, large subunit of the glutamine-dependent carbamoyl phosphate synthetase (CPSase). CPSase catalyzes the formation of carbamoyl phosphate from the ammonia moiety of glutamine, carbonate, and phosphate donated by ATP, constituting the first step of 2 biosynthetic pathways, one leading to arginine and/or urea and the other to pyrimidine nucleotides. The large subunit (synthetase) binds the substrates ammonia (free or transferred from glutamine from the small subunit), hydrogencarbonate and ATP and carries out an ATP-coupled ligase reaction, activating hydrogencarbonate by forming carboxy phosphate which reacts with ammonia to form carbamoyl phosphate. The sequence is that of Carbamoyl phosphate synthase large chain from Clostridium perfringens (strain 13 / Type A).